A 217-amino-acid polypeptide reads, in one-letter code: UDP-N-acetylglucosamine transferase subunit ALG14 (217 aa).

Residues 1–3 (MLS) are Lumenal-facing. A helical transmembrane segment spans residues 4 to 26 (ILILAATAAGLVILLFQRLWTVL). Residues 27 to 217 (GPHHVTPRES…PKSVYLGRIV (191 aa)) lie on the Cytoplasmic side of the membrane.

This sequence belongs to the ALG14 family. In terms of assembly, forms with ALG13 the active heterodimeric UDP-N-acetylglucosamine transferase complex.

Its subcellular location is the endoplasmic reticulum membrane. Part of the UDP-N-acetylglucosamine transferase complex that operates in the biosynthetic pathway of dolichol-linked oligosaccharides, the glycan precursors employed in protein asparagine (N)-glycosylation. The assembly of dolichol-linked oligosaccharides begins on the cytosolic side of the endoplasmic reticulum membrane and finishes in its lumen. The sequential addition of sugars to dolichol pyrophosphate produces dolichol-linked oligosaccharides containing fourteen sugars, including two GlcNAcs, nine mannoses and three glucoses. Once assembled, the oligosaccharides are transferred from the lipid to nascent proteins by oligosaccharyltransferases. Functions as a protein-membrane adapter recruiting ALG13 at the cytoplasmic face of the endoplasmic reticulum, where the complex catalyzes the second step of dolichol pyrophosphate biosynthesis, transferring a beta1,4-linked N-acetylglucosamine (GlcNAc) from UDP-GlcNAc to GlcNAc-pyrophosphatedolichol (Gn-PDol) to produce N,N'-diacetylchitobiosyl diphosphodolichol. N,N'-diacetylchitobiosyl diphosphodolichol is a substrate for ALG1, the following enzyme in the biosynthetic pathway. This chain is UDP-N-acetylglucosamine transferase subunit ALG14, found in Mus musculus (Mouse).